The primary structure comprises 203 residues: NAD(P)H-quinone oxidoreductase subunit M, chloroplastic (203 aa).

The N-terminal 21 residues, 1-21 (MAASSSYMACAKFSMLGWLGG), are a transit peptide targeting the chloroplast. A compositionally biased stretch (low complexity) spans 34-48 (SPQEQAEVQESQEVN). The tract at residues 34–61 (SPQEQAEVQESQEVNAQEEEKVKQPVQP) is disordered.

The protein belongs to the NDH complex subunit M family. As to quaternary structure, part of the chloroplast NDH complex, composed of a mixture of chloroplast and nucleus encoded subunits. Component of the NDH subcomplex A, at least composed of ndhH, ndhI, ndhJ, ndhK, ndhL, ndhM, ndhN and ndhO.

It localises to the plastid. Its subcellular location is the chloroplast thylakoid membrane. The catalysed reaction is a plastoquinone + NADH + (n+1) H(+)(in) = a plastoquinol + NAD(+) + n H(+)(out). It carries out the reaction a plastoquinone + NADPH + (n+1) H(+)(in) = a plastoquinol + NADP(+) + n H(+)(out). Its function is as follows. NDH shuttles electrons from NAD(P)H:plastoquinone, via FMN and iron-sulfur (Fe-S) centers, to quinones in the photosynthetic chain and possibly in a chloroplast respiratory chain. The immediate electron acceptor for the enzyme in this species is believed to be plastoquinone. Couples the redox reaction to proton translocation, and thus conserves the redox energy in a proton gradient. The sequence is that of NAD(P)H-quinone oxidoreductase subunit M, chloroplastic from Populus jackii (Balm of Gilead).